Here is a 338-residue protein sequence, read N- to C-terminus: Anthranilate phosphoribosyltransferase (338 aa).

Residues Gly-81, 84–85 (GD), Thr-89, 91–94 (NVST), 109–117 (KHGNRSVSS), and Ser-121 contribute to the 5-phospho-alpha-D-ribose 1-diphosphate site. Gly-81 lines the anthranilate pocket. Ser-93 is a Mg(2+) binding site. Asn-112 serves as a coordination point for anthranilate. Arg-167 contributes to the anthranilate binding site. The Mg(2+) site is built by Asp-226 and Glu-227.

Belongs to the anthranilate phosphoribosyltransferase family. Homodimer. It depends on Mg(2+) as a cofactor.

It catalyses the reaction N-(5-phospho-beta-D-ribosyl)anthranilate + diphosphate = 5-phospho-alpha-D-ribose 1-diphosphate + anthranilate. It functions in the pathway amino-acid biosynthesis; L-tryptophan biosynthesis; L-tryptophan from chorismate: step 2/5. Functionally, catalyzes the transfer of the phosphoribosyl group of 5-phosphorylribose-1-pyrophosphate (PRPP) to anthranilate to yield N-(5'-phosphoribosyl)-anthranilate (PRA). In Alkalilimnicola ehrlichii (strain ATCC BAA-1101 / DSM 17681 / MLHE-1), this protein is Anthranilate phosphoribosyltransferase.